The sequence spans 67 residues: Protein AaeX (67 aa).

The next 2 helical transmembrane spans lie at 3–23 (LFPVIVVFGLSFPPIFFELLL) and 43–63 (FVWHPALFNTALYCCLFYLIS).

Belongs to the AaeX family.

The protein localises to the cell membrane. The polypeptide is Protein AaeX (Salmonella agona (strain SL483)).